The sequence spans 161 residues: Regulator of ribonuclease activity A (161 aa).

The protein belongs to the RraA family. In terms of assembly, homotrimer. Binds to both RNA-binding sites in the C-terminal region of Rne and to RhlB.

Its subcellular location is the cytoplasm. Its function is as follows. Globally modulates RNA abundance by binding to RNase E (Rne) and regulating its endonucleolytic activity. Can modulate Rne action in a substrate-dependent manner by altering the composition of the degradosome. Modulates RNA-binding and helicase activities of the degradosome. This chain is Regulator of ribonuclease activity A, found in Serratia proteamaculans (strain 568).